The chain runs to 415 residues: Dynein assembly factor with WD repeat domains 1 (415 aa).

8 WD repeats span residues 90–129 (AHILPLTNVALNKAGSCFITGSYDRTCKVWDTASGEELHT), 132–174 (GHRN…HTFR), 175–214 (GHTAEIVCLSFNPQSTVVATGSMDTTAKLWDIQSGEEVVT), 217–256 (GHLAEIISLSFDTSGDRIITGSFDHTVVVWDASTGRKVHT), 259–298 (GHCAEISSALFSWDCSLILTGSMDKTCMLWDATSGKCVAT), 301–340 (GHDDEILDSCFDYTGKLIATASADGTARVYNATTRKCITK), 343–384 (GHEG…QVLE), and 386–415 (HTDEIFSCAFNYKGNIVITGSKDNSCRIWR).

This sequence belongs to the WD repeat WDR69 family. As to quaternary structure, interacts with IFT46.

It localises to the cytoplasm. It is found in the cytoskeleton. Its subcellular location is the flagellum basal body. The protein resides in the flagellum axoneme. Functionally, required for axonemal dynein assembly and ciliary motility in ciliated organs, including Kupffer's vesicle, during embryogenesis. Facilitates the onset of robust cilia motility during development. In Rattus norvegicus (Rat), this protein is Dynein assembly factor with WD repeat domains 1 (Daw1).